A 286-amino-acid chain; its full sequence is ATP synthase gamma chain (286 aa).

The protein belongs to the ATPase gamma chain family. F-type ATPases have 2 components, CF(1) - the catalytic core - and CF(0) - the membrane proton channel. CF(1) has five subunits: alpha(3), beta(3), gamma(1), delta(1), epsilon(1). CF(0) has three main subunits: a, b and c.

The protein localises to the cell inner membrane. Its function is as follows. Produces ATP from ADP in the presence of a proton gradient across the membrane. The gamma chain is believed to be important in regulating ATPase activity and the flow of protons through the CF(0) complex. The protein is ATP synthase gamma chain of Pseudoalteromonas atlantica (strain T6c / ATCC BAA-1087).